Consider the following 206-residue polypeptide: Probable GTP-binding protein EngB (206 aa).

The region spanning 8-195 (RSDEVVLVGR…EDAVNSHFDA (188 aa)) is the EngB-type G domain. Residues 16–23 (GRSNVGKS), 41–45 (GVTRQ), 60–63 (DLPG), 140–143 (NKMD), and 175–177 (ITA) each bind GTP. Residues serine 23 and threonine 43 each contribute to the Mg(2+) site.

This sequence belongs to the TRAFAC class TrmE-Era-EngA-EngB-Septin-like GTPase superfamily. EngB GTPase family. Mg(2+) is required as a cofactor.

In terms of biological role, necessary for normal cell division and for the maintenance of normal septation. The protein is Probable GTP-binding protein EngB of Halobacterium salinarum (strain ATCC 29341 / DSM 671 / R1).